A 398-amino-acid polypeptide reads, in one-letter code: AT-rich interactive domain-containing protein 6 (398 aa).

The tract at residues glutamate 25–lysine 87 is disordered. One can recognise an ARID domain in the interval proline 106 to arginine 197. Residues serine 213–alanine 236 form a disordered region. The sHSP domain maps to valine 305–glutamine 398.

Belongs to the small heat shock protein (HSP20) family.

Its subcellular location is the nucleus. The sequence is that of AT-rich interactive domain-containing protein 6 (ARID6) from Arabidopsis thaliana (Mouse-ear cress).